Here is a 287-residue protein sequence, read N- to C-terminus: ATP synthase gamma chain (287 aa).

Belongs to the ATPase gamma chain family. F-type ATPases have 2 components, CF(1) - the catalytic core - and CF(0) - the membrane proton channel. CF(1) has five subunits: alpha(3), beta(3), gamma(1), delta(1), epsilon(1). CF(0) has three main subunits: a, b and c.

It localises to the cell membrane. In terms of biological role, produces ATP from ADP in the presence of a proton gradient across the membrane. The gamma chain is believed to be important in regulating ATPase activity and the flow of protons through the CF(0) complex. The protein is ATP synthase gamma chain of Halothermothrix orenii (strain H 168 / OCM 544 / DSM 9562).